Reading from the N-terminus, the 345-residue chain is 3-isopropylmalate dehydrogenase (345 aa).

74–87 contacts NAD(+); it reads GPKWDGLPRKIRPE. Substrate-binding residues include R94, R104, R132, and D217. Mg(2+) is bound by residues D217, D241, and D245. Position 274 to 286 (274 to 286) interacts with NAD(+); the sequence is GSAPDIAGKGIAN.

It belongs to the isocitrate and isopropylmalate dehydrogenases family. LeuB type 1 subfamily. As to quaternary structure, homodimer. Mg(2+) is required as a cofactor. The cofactor is Mn(2+).

Its subcellular location is the cytoplasm. The catalysed reaction is (2R,3S)-3-isopropylmalate + NAD(+) = 4-methyl-2-oxopentanoate + CO2 + NADH. Its pathway is amino-acid biosynthesis; L-leucine biosynthesis; L-leucine from 3-methyl-2-oxobutanoate: step 3/4. In terms of biological role, catalyzes the oxidation of 3-carboxy-2-hydroxy-4-methylpentanoate (3-isopropylmalate) to 3-carboxy-4-methyl-2-oxopentanoate. The product decarboxylates to 4-methyl-2 oxopentanoate. The protein is 3-isopropylmalate dehydrogenase (leuB) of Thermus thermophilus (strain ATCC 27634 / DSM 579 / HB8).